The sequence spans 319 residues: 4-hydroxy-3-methylbut-2-enyl diphosphate reductase (319 aa).

C15 contacts [4Fe-4S] cluster. (2E)-4-hydroxy-3-methylbut-2-enyl diphosphate-binding residues include H44 and H77. Dimethylallyl diphosphate contacts are provided by H44 and H77. 2 residues coordinate isopentenyl diphosphate: H44 and H77. Residue C99 participates in [4Fe-4S] cluster binding. Residue H127 participates in (2E)-4-hydroxy-3-methylbut-2-enyl diphosphate binding. Position 127 (H127) interacts with dimethylallyl diphosphate. An isopentenyl diphosphate-binding site is contributed by H127. The active-site Proton donor is the E129. Residue T167 participates in (2E)-4-hydroxy-3-methylbut-2-enyl diphosphate binding. C197 serves as a coordination point for [4Fe-4S] cluster. S225, S226, N227, and S269 together coordinate (2E)-4-hydroxy-3-methylbut-2-enyl diphosphate. Residues S225, S226, N227, and S269 each contribute to the dimethylallyl diphosphate site. Isopentenyl diphosphate-binding residues include S225, S226, N227, and S269.

It belongs to the IspH family. Requires [4Fe-4S] cluster as cofactor.

It catalyses the reaction isopentenyl diphosphate + 2 oxidized [2Fe-2S]-[ferredoxin] + H2O = (2E)-4-hydroxy-3-methylbut-2-enyl diphosphate + 2 reduced [2Fe-2S]-[ferredoxin] + 2 H(+). The enzyme catalyses dimethylallyl diphosphate + 2 oxidized [2Fe-2S]-[ferredoxin] + H2O = (2E)-4-hydroxy-3-methylbut-2-enyl diphosphate + 2 reduced [2Fe-2S]-[ferredoxin] + 2 H(+). Its pathway is isoprenoid biosynthesis; dimethylallyl diphosphate biosynthesis; dimethylallyl diphosphate from (2E)-4-hydroxy-3-methylbutenyl diphosphate: step 1/1. It participates in isoprenoid biosynthesis; isopentenyl diphosphate biosynthesis via DXP pathway; isopentenyl diphosphate from 1-deoxy-D-xylulose 5-phosphate: step 6/6. In terms of biological role, catalyzes the conversion of 1-hydroxy-2-methyl-2-(E)-butenyl 4-diphosphate (HMBPP) into a mixture of isopentenyl diphosphate (IPP) and dimethylallyl diphosphate (DMAPP). Acts in the terminal step of the DOXP/MEP pathway for isoprenoid precursor biosynthesis. This chain is 4-hydroxy-3-methylbut-2-enyl diphosphate reductase, found in Rhodopirellula baltica (strain DSM 10527 / NCIMB 13988 / SH1).